A 378-amino-acid polypeptide reads, in one-letter code: uncharacterized protein (378 aa).

This sequence belongs to the mimivirus L17x/L18x family.

This is an uncharacterized protein from Acanthamoeba polyphaga (Amoeba).